The sequence spans 290 residues: 4-hydroxybenzoate octaprenyltransferase (290 aa).

6 consecutive transmembrane segments (helical) span residues 41 to 61 (WPLL…GCAM), 89 to 109 (WEAV…IQPL), 133 to 153 (FFAI…PMAF), 158 to 178 (DTVP…SVAY), 202 to 224 (FGRF…YVWI), and 269 to 289 (WLGG…GTAG).

The protein belongs to the UbiA prenyltransferase family. Mg(2+) serves as cofactor.

Its subcellular location is the cell inner membrane. It carries out the reaction all-trans-octaprenyl diphosphate + 4-hydroxybenzoate = 4-hydroxy-3-(all-trans-octaprenyl)benzoate + diphosphate. It participates in cofactor biosynthesis; ubiquinone biosynthesis. In terms of biological role, catalyzes the prenylation of para-hydroxybenzoate (PHB) with an all-trans polyprenyl group. Mediates the second step in the final reaction sequence of ubiquinone-8 (UQ-8) biosynthesis, which is the condensation of the polyisoprenoid side chain with PHB, generating the first membrane-bound Q intermediate 3-octaprenyl-4-hydroxybenzoate. The sequence is that of 4-hydroxybenzoate octaprenyltransferase from Burkholderia ambifaria (strain MC40-6).